The chain runs to 269 residues: Protein IAL1 (269 aa).

Residues 32–133 (SPCAACKFLR…QDLARAKYEL (102 aa)) form the LOB domain.

Belongs to the LOB domain-containing protein family. As to expression, expressed in leaves, leaf primordia, immature ears, immature tassels, whole ovules, silk and husk leaves.

It is found in the nucleus. This Zea mays (Maize) protein is Protein IAL1.